A 445-amino-acid chain; its full sequence is Exodeoxyribonuclease 7 large subunit (445 aa).

It belongs to the XseA family. As to quaternary structure, heterooligomer composed of large and small subunits.

It localises to the cytoplasm. The catalysed reaction is Exonucleolytic cleavage in either 5'- to 3'- or 3'- to 5'-direction to yield nucleoside 5'-phosphates.. In terms of biological role, bidirectionally degrades single-stranded DNA into large acid-insoluble oligonucleotides, which are then degraded further into small acid-soluble oligonucleotides. This chain is Exodeoxyribonuclease 7 large subunit, found in Xanthomonas axonopodis pv. citri (strain 306).